A 1097-amino-acid polypeptide reads, in one-letter code: MSRLKAASELALLVIILQLLQWPGSEASFGRDACSEMSIDGLCQCAPIMSEYEIICPANAENPTFRLTIQPKDYVQIMCNLTDTTDYQQLPKKLRIGEVDRVQMRRCMLPGHTPIASILDYLGIVSPTTLIFESDNLGMNITRQHLDRLHGLKRFRFTTRRLTHIPANLLTDMRNLSHLELRANIEEMPSHLFDDLENLESIEFGSNKLRQMPRGIFGKMPKLKQLNLWSNQLHNLTKHDFEGATSVLGIDIHDNGIEQLPHDVFAHLTNVTDINLSANLFRSLPQGLFDHNKHLNEVRLMNNRVPLATLPSRLFANQPELQILRLRAELQSLPGDLFEHSTQITNISLGDNLLKTLPATLLEHQVNLLSLDLSNNRLTHLPDSLFAHTTNLTDLRLEDNLLTGISGDIFSNLGNLVTLVMSRNRLRTIDSRAFVSTNGLRHLHLDHNDIDLQQPLLDIMLQTQINSPFGYMHGLLTLNLRNNSIIFVYNDWKNTMLQLRELDLSYNNISSLGYEDLAFLSQNRLHVNMTHNKIRRIALPEDVHLGEGYNNNLVHVDLNDNPLVCDCTILWFIQLVRGVHKPQYSRQFKLRTDRLVCSQPNVLEGTPVRQIEPQTLICPLDFSDDPRERKCPRGCNCHVRTYDKALVINCHSGNLTHVPRLPNLHKNMQLMELHLENNTLLRLPSANTPGYESVTSLHLAGNNLTSIDVDQLPTNLTHLDISWNHLQMLNATVLGFLNRTMKWRSVKLSGNPWMCDCTAKPLLLFTQDNFERIGDRNEMMCVNAEMPTRMVELSTNDICPAEKGVFIALAVVIALTGLLAGFTAALYYKFQTEIKIWLYAHNLLLWFVTEEDLDKDKKFDAFISYSHKDQSFIEDYLVPQLEHGPQKFQLCVHERDWLVGGHIPENIMRSVADSRRTIIVLSQNFIKSEWARLEFRAAHRSALNEGRSRIIVIIYSDIGDVEKLDEELKAYLKMNTYLKWGDPWFWDKLRFALPHRRPVGNIGNGALIKTALKGSTDDKLELIKPSPVTPPLTTPPAEATKNPLVAQLNGVTPHQAIMIANGKNGLTNLYTPNGKSHGNGHINGAFIINTNAKQSDV.

The first 27 residues, 1-27 (MSRLKAASELALLVIILQLLQWPGSEA), serve as a signal peptide directing secretion. Topologically, residues 28 to 807 (SFGRDACSEM…ICPAEKGVFI (780 aa)) are extracellular. Disulfide bonds link Cys-34/Cys-45, Cys-43/Cys-56, and Cys-79/Cys-107. N-linked (GlcNAc...) asparagine glycans are attached at residues Asn-80, Asn-140, and Asn-175. LRR repeat units lie at residues 175–195 (NLSH…LFDD), 198–219 (NLES…IFGK), 222–243 (KLKQ…DFEG), 246–267 (SVLG…VFAH), 270–291 (NVTD…LFDH), 294–314 (HLNE…PSRL), 320–340 (ELQI…LFEH), 343–364 (QITN…LLEH), 367–388 (NLLS…LFAH), 391–412 (NLTD…IFSN), 415–436 (NLVT…AFVS), 439–460 (GLRH…LDIM), 474–495 (GLLT…WKNT), 498–521 (QLRE…AFLS), and 523–544 (NRLH…EDVH). The N-linked (GlcNAc...) asparagine glycan is linked to Asn-235. 2 N-linked (GlcNAc...) asparagine glycosylation sites follow: Asn-270 and Asn-275. Asn-346 carries N-linked (GlcNAc...) asparagine glycosylation. N-linked (GlcNAc...) asparagine glycosylation occurs at Asn-391. Residues Asn-482, Asn-508, and Asn-528 are each glycosylated (N-linked (GlcNAc...) asparagine). The LRRCT 1 domain maps to 561–620 (NPLVCDCTILWFIQLVRGVHKPQYSRQFKLRTDRLVCSQPNVLEGTPVRQIEPQTLICPL). 4 cysteine pairs are disulfide-bonded: Cys-565-Cys-597, Cys-567-Cys-618, Cys-631-Cys-637, and Cys-635-Cys-650. Residues 622-663 (FSDDPRERKCPRGCNCHVRTYDKALVINCHSGNLTHVPRLPN) enclose the LRRNT domain. Asn-654, Asn-677, Asn-703, Asn-715, Asn-730, and Asn-738 each carry an N-linked (GlcNAc...) asparagine glycan. 3 LRR repeats span residues 669–690 (QLME…NTPG), 693–713 (SVTS…DQLP), and 715–738 (NLTH…GFLN). Positions 751–801 (NPWMCDCTAKPLLLFTQDNFERIGDRNEMMCVNAEMPTRMVELSTNDICPA) constitute an LRRCT 2 domain. Disulfide bonds link Cys-755/Cys-781 and Cys-757/Cys-799. The helical transmembrane segment at 808-828 (ALAVVIALTGLLAGFTAALYY) threads the bilayer. Residues 829–1097 (KFQTEIKIWL…INTNAKQSDV (269 aa)) lie on the Cytoplasmic side of the membrane. The 137-residue stretch at 857-993 (KKFDAFISYS…WFWDKLRFAL (137 aa)) folds into the TIR domain.

The protein belongs to the Toll-like receptor family. As to quaternary structure, in the absence of ligand, forms a low-affinity disulfide-linked homodimer. In the presence of ligand, crystal structures show one Tl molecule bound to a spaetzle C-106 homodimer. However, the active complex probably consists of two Tl molecules bound to a spaetzle C-106 homodimer. This is supported by in vitro experiments which also show binding of the spaetzle C-106 dimer to 2 Tl receptors. Ligand binding induces conformational changes in the extracellular domain of Tl. This may enable a secondary homodimerization interface at the C-terminus of the Tl extracellular domain. In terms of tissue distribution, in early embryos, concentrated in the pseudocleavage furrows that form transiently between nuclei before cellularization and in the cleavage furrows during cellularization (at protein level). Later, found on cells in the mesectoderm, stomodeum, proctodeum, anterior and posterior midguts, splanchnopleura, salivary gland placode and adjacent to the segmentally repeated tracheal placodes (at protein level). During and after germ band shortening, localized in a number of cell types, including the salivary gland, foregut, hindgut, Malpighian tubules and epidermis (at protein level). In embryos, high expression in M13 with comparatively low expression in M12.

The protein localises to the cell membrane. It localises to the cytoplasm. Receptor for the cleaved activated form of spz, spaetzle C-106. Binding to spaetzle C-106 activates the Toll signaling pathway and induces expression of the antifungal peptide drosomycin. Component of the extracellular signaling pathway that establishes dorsal-ventral polarity in the embryo. Promotes heterophilic cellular adhesion. Involved in synaptic targeting of motoneurons RP5 and V to muscle 12 (M12); functions as a repulsive cue inhibiting motoneuron synapse formation on muscle 13 (M13) to guide RP5 and V to the neighboring M12, where its expression is repressed by tey. May also function in embryonic neuronal survival and the synaptic targeting of SNa motoneurons. This chain is Protein toll, found in Drosophila melanogaster (Fruit fly).